A 507-amino-acid polypeptide reads, in one-letter code: ATP synthase subunit alpha, chloroplastic (507 aa).

ATP is bound at residue 170–177 (GDRQTGKT). Position 257 is a phosphothreonine (threonine 257).

Belongs to the ATPase alpha/beta chains family. In terms of assembly, F-type ATPases have 2 components, CF(1) - the catalytic core - and CF(0) - the membrane proton channel. CF(1) has five subunits: alpha(3), beta(3), gamma(1), delta(1), epsilon(1). CF(0) has four main subunits: a, b, b' and c.

It localises to the plastid. It is found in the chloroplast thylakoid membrane. The catalysed reaction is ATP + H2O + 4 H(+)(in) = ADP + phosphate + 5 H(+)(out). Functionally, produces ATP from ADP in the presence of a proton gradient across the membrane. The alpha chain is a regulatory subunit. This Lobularia maritima (Sweet alyssum) protein is ATP synthase subunit alpha, chloroplastic.